Reading from the N-terminus, the 225-residue chain is Probable septum site-determining protein MinC (225 aa).

The disordered stretch occupies residues 87-112; that stretch reads PTHMASPQGNSSKTRSSDTQPKPKTP. Positions 91–108 are enriched in polar residues; that stretch reads ASPQGNSSKTRSSDTQPK.

It belongs to the MinC family. Interacts with MinD and FtsZ.

Its function is as follows. Cell division inhibitor that blocks the formation of polar Z ring septums. Rapidly oscillates between the poles of the cell to destabilize FtsZ filaments that have formed before they mature into polar Z rings. Prevents FtsZ polymerization. The protein is Probable septum site-determining protein MinC of Prochlorococcus marinus (strain MIT 9313).